The chain runs to 231 residues: Uracil-DNA glycosylase (231 aa).

Asp-70 acts as the Proton acceptor in catalysis.

Belongs to the uracil-DNA glycosylase (UDG) superfamily. UNG family.

Its subcellular location is the cytoplasm. The enzyme catalyses Hydrolyzes single-stranded DNA or mismatched double-stranded DNA and polynucleotides, releasing free uracil.. In terms of biological role, excises uracil residues from the DNA which can arise as a result of misincorporation of dUMP residues by DNA polymerase or due to deamination of cytosine. This Campylobacter curvus (strain 525.92) protein is Uracil-DNA glycosylase.